The following is a 568-amino-acid chain: Proline--tRNA ligase (568 aa).

The protein belongs to the class-II aminoacyl-tRNA synthetase family. ProS type 1 subfamily. As to quaternary structure, homodimer.

The protein localises to the cytoplasm. It carries out the reaction tRNA(Pro) + L-proline + ATP = L-prolyl-tRNA(Pro) + AMP + diphosphate. Functionally, catalyzes the attachment of proline to tRNA(Pro) in a two-step reaction: proline is first activated by ATP to form Pro-AMP and then transferred to the acceptor end of tRNA(Pro). As ProRS can inadvertently accommodate and process non-cognate amino acids such as alanine and cysteine, to avoid such errors it has two additional distinct editing activities against alanine. One activity is designated as 'pretransfer' editing and involves the tRNA(Pro)-independent hydrolysis of activated Ala-AMP. The other activity is designated 'posttransfer' editing and involves deacylation of mischarged Ala-tRNA(Pro). The misacylated Cys-tRNA(Pro) is not edited by ProRS. This chain is Proline--tRNA ligase, found in Listeria monocytogenes serotype 4a (strain HCC23).